The sequence spans 100 residues: Small ribosomal subunit protein uS14c (100 aa).

Belongs to the universal ribosomal protein uS14 family. Part of the 30S ribosomal subunit.

The protein resides in the plastid. It is found in the chloroplast. Its function is as follows. Binds 16S rRNA, required for the assembly of 30S particles. The protein is Small ribosomal subunit protein uS14c of Anthoceros angustus (Hornwort).